A 137-amino-acid polypeptide reads, in one-letter code: MFVPKKSKYKKVFKGRIKGNAKGGSTLSFGDYGLKAMEVGKVQSKHIETARRVISRTLKRSGKVWIRIFPDTPVSKKPADVRMGKGKGSIEFWVFKAKPGRVLFEISSDVPMHLARLALEKATAKLPMKCKFISNHN.

Belongs to the universal ribosomal protein uL16 family. Part of the 50S ribosomal subunit.

In terms of biological role, binds 23S rRNA and is also seen to make contacts with the A and possibly P site tRNAs. In Wolbachia pipientis subsp. Culex pipiens (strain wPip), this protein is Large ribosomal subunit protein uL16.